A 788-amino-acid polypeptide reads, in one-letter code: Choline transporter-like protein 1 (788 aa).

The chain crosses the membrane as a helical span at residues 98–118 (FLFFVFLCGWVVVASLGIMWG). Asparagine 276 carries N-linked (GlcNAc...) asparagine glycosylation. A run of 4 helical transmembrane segments spans residues 329-349 (WWQT…WTVI), 352-372 (LLGS…LGFG), 409-429 (FVVA…ILFI), and 458-478 (LFPF…AIWL). N-linked (GlcNAc...) asparagine glycosylation is present at asparagine 497. The next 5 helical transmembrane spans lie at 531 to 551 (LFAF…ALAG), 583 to 603 (LGSI…RVML), 620 to 640 (WFLM…KFLT), 679 to 699 (AGIL…ILSF), and 718 to 738 (YYFV…DLFF).

The protein belongs to the CTL (choline transporter-like) family.

The protein resides in the membrane. The protein is Choline transporter-like protein 1 (chtl-1) of Caenorhabditis briggsae.